We begin with the raw amino-acid sequence, 575 residues long: MRPWTGSWRWIMLILFAWGTLLFYIGGHLVRDNDHPDHSSRELSKILAKLERLKQQNEDLRRMAESLRIPEGPIDQAPASGRVRALEEQLLKAKEQIENYKKQTRNGLGKDHEILRRRIENGAKELWFFLQSELKKLKNLEGNVLQRHADEFLSDLGHHERSIMTDLYYLSQTDGAGDWREKEAKDLTELVQRRITYLQNPKDCSKAKKLVCNINKGCGYGCQLHHVVYCFMIAYGTQRTLILESQNWRYATGGWETVFRPVNETCTDRSGTSTGHWSGEVKDKNVQVVELPIVDSLHPRPPYLPLAVPEDLADRLVRVHGDPAVWWVSQFVKYLIRPQPWLEKEIEEATKKLGFNIPVIGVHVRRTDKVGTEAAFHPIEEYMVHVEEHFQLLARRMQVDKRRVYLATDDPSLLKEAKTKYPTYEFISDNSISWSAGLHNRYTENSLRGVILDIHFLSQADFLVCTFSSQVCRVAYEIMQTLHPDASANFHSLDDIYYFGGQNAHNQIAIYPHQPRTADEIPMEPGDIIGVAGNHWDGYSKGVNRKLGRTGLYPSYKVREKIETVKYPTYPEAEK.

Residues 1–9 are Cytoplasmic-facing; sequence MRPWTGSWR. The helical; Signal-anchor for type II membrane protein transmembrane segment at 10–30 threads the bilayer; it reads WIMLILFAWGTLLFYIGGHLV. Over 31-575 the chain is Lumenal; the sequence is RDNDHPDHSS…KYPTYPEAEK (545 aa). 3 disulfide bridges follow: Cys204/Cys266, Cys212/Cys230, and Cys218/Cys222. A GT23 domain is found at 206–493; that stretch reads KAKKLVCNIN…PDASANFHSL (288 aa). Phosphoserine is present on Ser278. The SH3-binding signature appears at 299-305; the sequence is PRPPYLP. Residues 365 to 366 form an important for donor substrate binding region; sequence RR. Residues Cys465 and Cys472 are joined by a disulfide bond. The region spanning 502 to 563 is the SH3 domain; it reads QNAHNQIAIY…PSYKVREKIE (62 aa).

This sequence belongs to the glycosyltransferase 23 family. Post-translationally, tyrosine phosphorylated by PKDCC/VLK.

Its subcellular location is the golgi apparatus. The protein resides in the golgi stack membrane. It carries out the reaction N(4)-{beta-D-GlcNAc-(1-&gt;2)-alpha-D-Man-(1-&gt;3)-[beta-D-GlcNAc-(1-&gt;2)-alpha-D-Man-(1-&gt;6)]-beta-D-Man-(1-&gt;4)-beta-D-GlcNAc-(1-&gt;4)-beta-D-GlcNAc}-L-asparaginyl-[protein] + GDP-beta-L-fucose = an N(4)-{beta-D-GlcNAc-(1-&gt;2)-alpha-D-Man-(1-&gt;3)-[beta-D-GlcNAc-(1-&gt;2)-alpha-D-Man-(1-&gt;6)]-beta-D-Man-(1-&gt;4)-beta-D-GlcNAc-(1-&gt;4)-[alpha-L-Fuc-(1-&gt;6)]-beta-D-GlcNAc}-L-asparaginyl-[protein] + GDP + H(+). It functions in the pathway protein modification; protein glycosylation. Functionally, catalyzes the addition of fucose in alpha 1-6 linkage to the first GlcNAc residue, next to the peptide chains in N-glycans. In Canis lupus familiaris (Dog), this protein is Alpha-(1,6)-fucosyltransferase (FUT8).